The following is a 517-amino-acid chain: T-complex protein 11-like protein 2 (517 aa).

The tract at residues M1 to G59 is disordered. S16 carries the phosphoserine modification. The segment covering S36–S55 has biased composition (low complexity).

This sequence belongs to the TCP11 family. As to quaternary structure, interacts with FMNL2; this interaction promotes muscle-derived satellite cell (MDSC) migration and differentiation.

It localises to the cytoplasm. The protein localises to the cytoskeleton. In terms of biological role, promotes the migration of muscle-derived satellite cells (MDSCs) during differentiation throught interaction with FMNL2 and therefore may participate in microfilament assembly. The polypeptide is T-complex protein 11-like protein 2 (Mus musculus (Mouse)).